The chain runs to 62 residues: Photosystem II reaction center protein Z (62 aa).

Helical transmembrane passes span 8-28 and 41-61; these read AVFALIATSSILLIGVPVVFA and FSGTSLWIGLVFLVGILNSLI.

Belongs to the PsbZ family. As to quaternary structure, PSII is composed of 1 copy each of membrane proteins PsbA, PsbB, PsbC, PsbD, PsbE, PsbF, PsbH, PsbI, PsbJ, PsbK, PsbL, PsbM, PsbT, PsbY, PsbZ, Psb30/Ycf12, at least 3 peripheral proteins of the oxygen-evolving complex and a large number of cofactors. It forms dimeric complexes.

Its subcellular location is the plastid. The protein localises to the chloroplast thylakoid membrane. In terms of biological role, may control the interaction of photosystem II (PSII) cores with the light-harvesting antenna, regulates electron flow through the 2 photosystem reaction centers. PSII is a light-driven water plastoquinone oxidoreductase, using light energy to abstract electrons from H(2)O, generating a proton gradient subsequently used for ATP formation. This Daucus carota (Wild carrot) protein is Photosystem II reaction center protein Z.